We begin with the raw amino-acid sequence, 213 residues long: Orotate phosphoribosyltransferase (213 aa).

Lys26 is a 5-phospho-alpha-D-ribose 1-diphosphate binding site. Position 34–35 (34–35 (FF)) interacts with orotate. 5-phospho-alpha-D-ribose 1-diphosphate is bound by residues 72–73 (YK), Arg99, Lys100, Lys103, His105, and 124–132 (DDVITAGTA). Thr128 and Arg156 together coordinate orotate.

It belongs to the purine/pyrimidine phosphoribosyltransferase family. PyrE subfamily. Homodimer. Requires Mg(2+) as cofactor.

The catalysed reaction is orotidine 5'-phosphate + diphosphate = orotate + 5-phospho-alpha-D-ribose 1-diphosphate. Its pathway is pyrimidine metabolism; UMP biosynthesis via de novo pathway; UMP from orotate: step 1/2. Functionally, catalyzes the transfer of a ribosyl phosphate group from 5-phosphoribose 1-diphosphate to orotate, leading to the formation of orotidine monophosphate (OMP). The sequence is that of Orotate phosphoribosyltransferase from Shigella dysenteriae serotype 1 (strain Sd197).